Here is a 272-residue protein sequence, read N- to C-terminus: Ribosomal RNA small subunit methyltransferase A (272 aa).

Residues histidine 13, leucine 15, glycine 40, glutamate 61, aspartate 85, and asparagine 105 each coordinate S-adenosyl-L-methionine.

This sequence belongs to the class I-like SAM-binding methyltransferase superfamily. rRNA adenine N(6)-methyltransferase family. RsmA subfamily.

Its subcellular location is the cytoplasm. The enzyme catalyses adenosine(1518)/adenosine(1519) in 16S rRNA + 4 S-adenosyl-L-methionine = N(6)-dimethyladenosine(1518)/N(6)-dimethyladenosine(1519) in 16S rRNA + 4 S-adenosyl-L-homocysteine + 4 H(+). Its function is as follows. Specifically dimethylates two adjacent adenosines (A1518 and A1519) in the loop of a conserved hairpin near the 3'-end of 16S rRNA in the 30S particle. May play a critical role in biogenesis of 30S subunits. This is Ribosomal RNA small subunit methyltransferase A from Bacteroides fragilis (strain ATCC 25285 / DSM 2151 / CCUG 4856 / JCM 11019 / LMG 10263 / NCTC 9343 / Onslow / VPI 2553 / EN-2).